The sequence spans 262 residues: Flap endonuclease Xni (262 aa).

Asp-105 contacts Mg(2+). Positions 162–257 (ERSQFLDLMA…FRVIDSPPEK (96 aa)) constitute a 5'-3' exonuclease domain. Positions 172, 173, 181, 183, and 186 each coordinate K(+). The tract at residues 185–190 (GIGPKS) is interaction with DNA.

The protein belongs to the Xni family. Mg(2+) is required as a cofactor. Requires K(+) as cofactor.

In terms of biological role, has flap endonuclease activity. During DNA replication, flap endonucleases cleave the 5'-overhanging flap structure that is generated by displacement synthesis when DNA polymerase encounters the 5'-end of a downstream Okazaki fragment. The sequence is that of Flap endonuclease Xni from Shewanella baltica (strain OS155 / ATCC BAA-1091).